We begin with the raw amino-acid sequence, 225 residues long: ATP-dependent dethiobiotin synthetase BioD 1 (225 aa).

Residues Glu-13 and Thr-17 each coordinate Mg(2+). 13–18 (EVGKTV) provides a ligand contact to ATP. Lys-38 is an active-site residue. Ser-42 serves as a coordination point for substrate. Asp-55 and Glu-116 together coordinate Mg(2+). Residues Asp-55, 116 to 119 (EGAG), and 176 to 177 (ND) each bind ATP. Substrate is bound at residue Tyr-188. Residues 205–207 (PWL) and Glu-212 each bind ATP.

The protein belongs to the dethiobiotin synthetase family. Homodimer. It depends on Mg(2+) as a cofactor.

It localises to the cytoplasm. The enzyme catalyses (7R,8S)-7,8-diammoniononanoate + CO2 + ATP = (4R,5S)-dethiobiotin + ADP + phosphate + 3 H(+). The protein operates within cofactor biosynthesis; biotin biosynthesis; biotin from 7,8-diaminononanoate: step 1/2. Its function is as follows. Catalyzes a mechanistically unusual reaction, the ATP-dependent insertion of CO2 between the N7 and N8 nitrogen atoms of 7,8-diaminopelargonic acid (DAPA, also called 7,8-diammoniononanoate) to form a ureido ring. Only CTP can partially replace ATP while diaminobiotin is only 37% as effective as 7,8-diaminopelargonic acid. In another study both CTP and GTP (but not ITP, TTP or UTP) can partially replace ATP. In Escherichia coli (strain K12), this protein is ATP-dependent dethiobiotin synthetase BioD 1.